A 550-amino-acid chain; its full sequence is Methionine--tRNA ligase (550 aa).

The 'HIGH' region signature appears at 10 to 22 (LPYPNNSSPHLGN). Residues 336–340 (KFSKS) carry the 'KMSKS' region motif. Lys339 is a binding site for ATP.

It belongs to the class-I aminoacyl-tRNA synthetase family.

The enzyme catalyses tRNA(Met) + L-methionine + ATP = L-methionyl-tRNA(Met) + AMP + diphosphate. The sequence is that of Methionine--tRNA ligase (MARS) from Acanthamoeba polyphaga mimivirus (APMV).